Here is a 207-residue protein sequence, read N- to C-terminus: Ribosomal RNA large subunit methyltransferase E (207 aa).

S-adenosyl-L-methionine is bound by residues glycine 60, tryptophan 62, aspartate 80, aspartate 96, and aspartate 121. The active-site Proton acceptor is the lysine 161.

Belongs to the class I-like SAM-binding methyltransferase superfamily. RNA methyltransferase RlmE family.

It localises to the cytoplasm. It carries out the reaction uridine(2552) in 23S rRNA + S-adenosyl-L-methionine = 2'-O-methyluridine(2552) in 23S rRNA + S-adenosyl-L-homocysteine + H(+). Its function is as follows. Specifically methylates the uridine in position 2552 of 23S rRNA at the 2'-O position of the ribose in the fully assembled 50S ribosomal subunit. This Ectopseudomonas mendocina (strain ymp) (Pseudomonas mendocina) protein is Ribosomal RNA large subunit methyltransferase E.